A 419-amino-acid chain; its full sequence is Arginine biosynthesis bifunctional protein ArgJ (419 aa).

Substrate-binding residues include threonine 154, lysine 180, threonine 191, glutamate 277, asparagine 414, and threonine 419. Catalysis depends on threonine 191, which acts as the Nucleophile.

The protein belongs to the ArgJ family. In terms of assembly, heterotetramer of two alpha and two beta chains.

Its subcellular location is the cytoplasm. It carries out the reaction N(2)-acetyl-L-ornithine + L-glutamate = N-acetyl-L-glutamate + L-ornithine. The catalysed reaction is L-glutamate + acetyl-CoA = N-acetyl-L-glutamate + CoA + H(+). It functions in the pathway amino-acid biosynthesis; L-arginine biosynthesis; L-ornithine and N-acetyl-L-glutamate from L-glutamate and N(2)-acetyl-L-ornithine (cyclic): step 1/1. Its pathway is amino-acid biosynthesis; L-arginine biosynthesis; N(2)-acetyl-L-ornithine from L-glutamate: step 1/4. Functionally, catalyzes two activities which are involved in the cyclic version of arginine biosynthesis: the synthesis of N-acetylglutamate from glutamate and acetyl-CoA as the acetyl donor, and of ornithine by transacetylation between N(2)-acetylornithine and glutamate. This Thermosynechococcus vestitus (strain NIES-2133 / IAM M-273 / BP-1) protein is Arginine biosynthesis bifunctional protein ArgJ.